A 239-amino-acid chain; its full sequence is Ribonuclease HII (239 aa).

Residues lysine 18 to glutamate 231 enclose the RNase H type-2 domain. A divalent metal cation-binding residues include aspartate 24, glutamate 25, and aspartate 125.

Belongs to the RNase HII family. It depends on Mn(2+) as a cofactor. The cofactor is Mg(2+).

It is found in the cytoplasm. The enzyme catalyses Endonucleolytic cleavage to 5'-phosphomonoester.. In terms of biological role, endonuclease that specifically degrades the RNA of RNA-DNA hybrids. The protein is Ribonuclease HII of Methanococcus maripaludis (strain C6 / ATCC BAA-1332).